We begin with the raw amino-acid sequence, 142 residues long: Large ribosomal subunit protein uL13 (142 aa).

The protein belongs to the universal ribosomal protein uL13 family. As to quaternary structure, part of the 50S ribosomal subunit.

Functionally, this protein is one of the early assembly proteins of the 50S ribosomal subunit, although it is not seen to bind rRNA by itself. It is important during the early stages of 50S assembly. The protein is Large ribosomal subunit protein uL13 of Alkalilimnicola ehrlichii (strain ATCC BAA-1101 / DSM 17681 / MLHE-1).